The chain runs to 410 residues: Peptidase T (410 aa).

H78 contacts Zn(2+). The active site involves D80. D140 is a binding site for Zn(2+). E174 acts as the Proton acceptor in catalysis. Residues E175, D197, and H379 each contribute to the Zn(2+) site.

It belongs to the peptidase M20B family. Zn(2+) serves as cofactor.

The protein localises to the cytoplasm. The catalysed reaction is Release of the N-terminal residue from a tripeptide.. Functionally, cleaves the N-terminal amino acid of tripeptides. The sequence is that of Peptidase T from Staphylococcus saprophyticus subsp. saprophyticus (strain ATCC 15305 / DSM 20229 / NCIMB 8711 / NCTC 7292 / S-41).